An 834-amino-acid chain; its full sequence is Protein Jade-1 (834 aa).

Residues 1 to 46 (MKRGRLPSSSEDSDDNGSLSTTWSQHSRSQHGRSSTCSRPEDRKPS) form a disordered region. Low complexity predominate over residues 24–35 (SQHSRSQHGRSS). Residues 61 to 81 (DSYQLNPDDYYVLADPWRQEW) are interaction with KAT7/HBO1 and histones. The tract at residues 81–189 (WEKGVQVPVS…EQRCYDNMNH (109 aa)) is interaction with histones. Serine 90 carries the phosphoserine modification. Threonine 93 is modified (phosphothreonine). Residue lysine 115 forms a Glycyl lysine isopeptide (Lys-Gly) (interchain with G-Cter in SUMO2) linkage. The PHD-type 1 zinc-finger motif lies at 204 to 254 (DVVCDVCQSPDGEDGNEMVFCDKCNICVHQACYGILKVPEGSWLCRTCALG). The segment at 256–290 (QPKCLLCPKKGGAMKPTRSGTKWVHVSCALWIPEV) adopts a C2HC pre-PHD-type zinc-finger fold. Residues 314 to 370 (LVCSLCNEKFGASIQCSVKNCRTAFHVTCAFDRGLEMKTILAENDEVKFKSYCPKHS) form a PHD-type 2 zinc finger. The segment at 367 to 409 (PKHSSHRKPEEGLGEGAAQENGAPESSPQSPLEPYGSLEPNRE) is disordered. A Glycyl lysine isopeptide (Lys-Gly) (interchain with G-Cter in SUMO2) cross-link involves residue lysine 573. Disordered regions lie at residues 589–621 (HPLK…CGRR) and 676–716 (DKSF…GTRK). Serine 603 bears the Phosphoserine mark. Lysine 609 is subject to N6-acetyllysine. Residues serine 704 and serine 735 each carry the phosphoserine modification. Positions 738 to 819 (KSWGGFRIPK…EKKCIHASST (82 aa)) are disordered. 2 stretches are compositionally biased toward basic and acidic residues: residues 747-768 (KKGE…HSDC) and 777-790 (PAKE…RADS).

The protein belongs to the JADE family. In terms of assembly, component of the HBO1 complex composed at least of ING4 or ING5, KAT7/HBO1, MEAF6, and one of JADE1, JADE2 and JADE3. Interacts with NPHP4. Highly expressed in kidney. Also present in liver (at protein level).

It localises to the nucleus. It is found in the chromosome. Its subcellular location is the cytoplasm. The protein resides in the cytoskeleton. The protein localises to the cilium basal body. Scaffold subunit of some HBO1 complexes, which have a histone H4 acetyltransferase activity. Plays a key role in HBO1 complex by directing KAT7/HBO1 specificity towards histone H4 acetylation (H4K5ac, H4K8ac and H4K12ac), regulating DNA replication initiation, regulating DNA replication initiation. May also promote acetylation of nucleosomal histone H4 by KAT5. Promotes apoptosis. May act as a renal tumor suppressor. Negatively regulates canonical Wnt signaling; at least in part, cooperates with NPHP4 in this function. This Mus musculus (Mouse) protein is Protein Jade-1 (Jade1).